The following is a 130-amino-acid chain: uncharacterized protein (130 aa).

An N-linked (GlcNAc...) asparagine glycan is attached at Asn-102. A helical transmembrane segment spans residues 110 to 130; the sequence is DPLAFYLMFLIIITILLIMIL.

Its subcellular location is the membrane. This is an uncharacterized protein from Dictyostelium discoideum (Social amoeba).